The following is a 186-amino-acid chain: Inner membrane-spanning protein YciB (186 aa).

A run of 5 helical transmembrane segments spans residues 10–30, 47–67, 76–96, 121–141, and 149–169; these read IILF…AVAI, VEPL…ATLL, WKPT…QLMF, WGWT…AYHF, and FKLF…ALYL.

The protein belongs to the YciB family.

It is found in the cell inner membrane. Functionally, plays a role in cell envelope biogenesis, maintenance of cell envelope integrity and membrane homeostasis. This Acidovorax ebreus (strain TPSY) (Diaphorobacter sp. (strain TPSY)) protein is Inner membrane-spanning protein YciB.